The primary structure comprises 290 residues: N-acetylmannosamine kinase (290 aa).

Residues Ala-6–Lys-13 and Gly-132–Leu-139 contribute to the ATP site. Zn(2+) is bound by residues His-156, Cys-166, Cys-168, and Cys-173.

Belongs to the ROK (NagC/XylR) family. NanK subfamily. In terms of assembly, homodimer.

It carries out the reaction an N-acyl-D-mannosamine + ATP = an N-acyl-D-mannosamine 6-phosphate + ADP + H(+). Its pathway is amino-sugar metabolism; N-acetylneuraminate degradation; D-fructose 6-phosphate from N-acetylneuraminate: step 2/5. Catalyzes the phosphorylation of N-acetylmannosamine (ManNAc) to ManNAc-6-P. The chain is N-acetylmannosamine kinase from Yersinia pseudotuberculosis serotype O:3 (strain YPIII).